Reading from the N-terminus, the 143-residue chain is Large ribosomal subunit protein uL11 (143 aa).

It belongs to the universal ribosomal protein uL11 family. As to quaternary structure, part of the ribosomal stalk of the 50S ribosomal subunit. Interacts with L10 and the large rRNA to form the base of the stalk. L10 forms an elongated spine to which L12 dimers bind in a sequential fashion forming a multimeric L10(L12)X complex. In terms of processing, one or more lysine residues are methylated.

Functionally, forms part of the ribosomal stalk which helps the ribosome interact with GTP-bound translation factors. The protein is Large ribosomal subunit protein uL11 of Cupriavidus metallidurans (strain ATCC 43123 / DSM 2839 / NBRC 102507 / CH34) (Ralstonia metallidurans).